Consider the following 396-residue polypeptide: Formate-dependent phosphoribosylglycinamide formyltransferase (396 aa).

N(1)-(5-phospho-beta-D-ribosyl)glycinamide contacts are provided by residues 24-25 (EL) and glutamate 84. Residues arginine 116, lysine 157, 162-167 (SSGKGQ), 197-200 (EGFV), and glutamate 205 contribute to the ATP site. The region spanning 121–310 (RLAAETLGIK…EFALHVRAIL (190 aa)) is the ATP-grasp domain. Residues glutamate 269 and glutamate 281 each coordinate Mg(2+). Residues aspartate 288, lysine 359, and 366 to 367 (RR) each bind N(1)-(5-phospho-beta-D-ribosyl)glycinamide.

The protein belongs to the PurK/PurT family. In terms of assembly, homodimer.

The enzyme catalyses N(1)-(5-phospho-beta-D-ribosyl)glycinamide + formate + ATP = N(2)-formyl-N(1)-(5-phospho-beta-D-ribosyl)glycinamide + ADP + phosphate + H(+). It participates in purine metabolism; IMP biosynthesis via de novo pathway; N(2)-formyl-N(1)-(5-phospho-D-ribosyl)glycinamide from N(1)-(5-phospho-D-ribosyl)glycinamide (formate route): step 1/1. In terms of biological role, involved in the de novo purine biosynthesis. Catalyzes the transfer of formate to 5-phospho-ribosyl-glycinamide (GAR), producing 5-phospho-ribosyl-N-formylglycinamide (FGAR). Formate is provided by PurU via hydrolysis of 10-formyl-tetrahydrofolate. This Psychromonas ingrahamii (strain DSM 17664 / CCUG 51855 / 37) protein is Formate-dependent phosphoribosylglycinamide formyltransferase.